A 71-amino-acid polypeptide reads, in one-letter code: ATP synthase subunit c (71 aa).

2 helical membrane passes run 4–24 (AVIG…GIGI) and 48–68 (IIGA…AFMI).

Belongs to the ATPase C chain family. As to quaternary structure, F-type ATPases have 2 components, F(1) - the catalytic core - and F(0) - the membrane proton channel. F(1) has five subunits: alpha(3), beta(3), gamma(1), delta(1), epsilon(1). F(0) has three main subunits: a(1), b(2) and c(10-14). The alpha and beta chains form an alternating ring which encloses part of the gamma chain. F(1) is attached to F(0) by a central stalk formed by the gamma and epsilon chains, while a peripheral stalk is formed by the delta and b chains.

Its subcellular location is the cell membrane. Its function is as follows. F(1)F(0) ATP synthase produces ATP from ADP in the presence of a proton or sodium gradient. F-type ATPases consist of two structural domains, F(1) containing the extramembraneous catalytic core and F(0) containing the membrane proton channel, linked together by a central stalk and a peripheral stalk. During catalysis, ATP synthesis in the catalytic domain of F(1) is coupled via a rotary mechanism of the central stalk subunits to proton translocation. In terms of biological role, key component of the F(0) channel; it plays a direct role in translocation across the membrane. A homomeric c-ring of between 10-14 subunits forms the central stalk rotor element with the F(1) delta and epsilon subunits. This chain is ATP synthase subunit c, found in Clostridium botulinum (strain Alaska E43 / Type E3).